The sequence spans 254 residues: Imidazole glycerol phosphate synthase subunit HisF (254 aa).

Residues Asp12 and Asp131 contribute to the active site.

The protein belongs to the HisA/HisF family. As to quaternary structure, heterodimer of HisH and HisF.

Its subcellular location is the cytoplasm. The enzyme catalyses 5-[(5-phospho-1-deoxy-D-ribulos-1-ylimino)methylamino]-1-(5-phospho-beta-D-ribosyl)imidazole-4-carboxamide + L-glutamine = D-erythro-1-(imidazol-4-yl)glycerol 3-phosphate + 5-amino-1-(5-phospho-beta-D-ribosyl)imidazole-4-carboxamide + L-glutamate + H(+). The protein operates within amino-acid biosynthesis; L-histidine biosynthesis; L-histidine from 5-phospho-alpha-D-ribose 1-diphosphate: step 5/9. IGPS catalyzes the conversion of PRFAR and glutamine to IGP, AICAR and glutamate. The HisF subunit catalyzes the cyclization activity that produces IGP and AICAR from PRFAR using the ammonia provided by the HisH subunit. The polypeptide is Imidazole glycerol phosphate synthase subunit HisF (Leifsonia xyli subsp. xyli (strain CTCB07)).